The chain runs to 612 residues: MSDKSELKAELERKKQRLAQIREGKKRKEEERKKKETDQKKEAVAPVQEESDLEKKRREAEALLQSMGLTAESPIVPPPMSPSSKSVSTPSEAGSQDSGDGAVGSRRGPIKLGMAKITQVDFPPREIVTYTKETQTPVMAQPKEDEEEEDDVVTPKPPIEPEEEKTLKKDEESDSKAPPHELTEEEKQQILHSEEFLSFFDHSTRIVERALSEQINIFFDYSGRDLEDKEGEIQAGAKLSLNRQFFDERWSKHRVVSCLDWSSQYPELLVASYNNNEDAPHEPDGVALVWNMKYKKTTPEYVFHCQSAVMSATFAKFHPNLVVGGTYSGQIVLWDNRSNKRTPVQRTPLSAAAHTHPVYCVNVVGTQNAHNLISISTDGKICSWSLDMLSHPQDSMELVHKQSKAVAVTSMSFPVGDVNNFVVGSEEGSVYTACRHGSKAGISEMFEGHQGPITGIHCHSAVGAVDFSHLFVTSSFDWTVKLWTTKNNKPLYSFEDNSDYVYDVMWSPTHPALFACVDGMGRLDLWNLNNDTEVPTASISVEGNPALNRVRWTHSGREIAVGDSEGQIVIYDVGEQIAVPRNDEWARFGRTLAEINANRADAEEEAATRIPA.

2 stretches are compositionally biased toward basic and acidic residues: residues 1–13 (MSDK…ELER) and 20–43 (QIRE…KKEA). Disordered stretches follow at residues 1-117 (MSDK…MAKI) and 129-188 (TYTK…EEKQ). Position 2 is an N-acetylserine (Ser-2). A Diphosphoserine modification is found at Ser-51. A phosphoserine mark is found at Ser-51 and Ser-84. Positions 82 to 91 (PSSKSVSTPS) are enriched in low complexity. Residue Thr-89 is modified to Phosphothreonine. Phosphoserine occurs at positions 91, 95, and 98. A compositionally biased stretch (basic and acidic residues) spans 164–188 (EKTLKKDEESDSKAPPHELTEEEKQ). 7 WD repeats span residues 251-300 (SKHR…TTPE), 304-344 (HCQS…RTPV), 353-394 (AHTH…HPQD), 403-443 (SKAV…AGIS), 448-493 (GHQG…PLYS), 496-536 (DNSD…EVPT), and 542-581 (EGNP…AVPR).

It belongs to the dynein intermediate chain family. In terms of assembly, homodimer. The cytoplasmic dynein 1 complex consists of two catalytic heavy chains (HCs) and a number of non-catalytic subunits presented by intermediate chains (ICs), light intermediate chains (LICs) and light chains (LCs); the composition seems to vary in respect to the IC, LIC and LC composition. The heavy chain homodimer serves as a scaffold for the probable homodimeric assembly of the respective non-catalytic subunits. The ICs and LICs bind directly to the HC dimer and the LCs assemble on the IC dimer. Interacts with DYNLT3. Interacts with DYNLT1. Interacts (dephosphorylated at Ser-84) with DCTN1. Interacts with BICD2. Interacts with SPEF2. Interacts with CFAP61. The phosphorylation status of Ser-84 appears to be involved in dynactin-dependent target binding. In terms of processing, pyrophosphorylation by 5-diphosphoinositol pentakisphosphate (5-IP7) promotes interaction with DCTN1. Serine pyrophosphorylation is achieved by Mg(2+)-dependent, but enzyme independent transfer of a beta-phosphate from a inositol pyrophosphate to a pre-phosphorylated serine residue.

The protein localises to the cytoplasm. It localises to the cytoskeleton. In terms of biological role, acts as one of several non-catalytic accessory components of the cytoplasmic dynein 1 complex that are thought to be involved in linking dynein to cargos and to adapter proteins that regulate dynein function. Cytoplasmic dynein 1 acts as a motor for the intracellular retrograde motility of vesicles and organelles along microtubules. The intermediate chains mediate the binding of dynein to dynactin via its 150 kDa component (p150-glued) DCTN1. Involved in membrane-transport, such as Golgi apparatus, late endosomes and lysosomes. This chain is Cytoplasmic dynein 1 intermediate chain 2 (DYNC1I2), found in Bos taurus (Bovine).